The sequence spans 377 residues: DnaJ-related protein SCJ1 (377 aa).

Positions 1–21 are cleaved as a signal peptide; sequence MIPKLYIHLILSLLLLPLILA. Residues 23-88 form the J domain; that stretch reads DYYAILEIDK…EKKKIYDQFG (66 aa). The CR-type zinc-finger motif lies at 156 to 237; sequence GSSIEFTLNL…CHGKKVTKKN (82 aa). 4 CXXCXGXG motif repeats span residues 169-176, 185-192, 211-218, and 225-232; these read CDACHGSG, CPDCQGRG, CGRCGGTG, and CKTCHGKK. The Cell attachment site signature appears at 288–290; the sequence is RGD. Positions 374-377 match the Prevents secretion from ER motif; the sequence is KDEL.

Its subcellular location is the endoplasmic reticulum lumen. In terms of biological role, regulates protein folding in the endoplasmic reticulum lumen. Probably acts as a J-protein for the Hsp70-type chaperone KAR2 by stimulating its ATP-dependent reaction cycle and initiating folding reactions. Also involved in the endoplasmic reticulum-associated degradation (ERAD) process. Cooperates with KAR2 and another J-protein JEM1 to facilitate the export of ERAD substrates to the cytoplasm by maintaining them in a translocation-competent state and preventing their aggregation in the endoplasmic reticulum lumen. This is DnaJ-related protein SCJ1 (SCJ1) from Saccharomyces cerevisiae (strain ATCC 204508 / S288c) (Baker's yeast).